The sequence spans 150 residues: Large ribosomal subunit protein bL9 (150 aa).

Belongs to the bacterial ribosomal protein bL9 family.

Its function is as follows. Binds to the 23S rRNA. This chain is Large ribosomal subunit protein bL9, found in Streptococcus sanguinis (strain SK36).